Here is a 579-residue protein sequence, read N- to C-terminus: Glutamate--tRNA ligase (579 aa).

A 'HIGH' region motif is present at residues 114–124 (PNPNGPWHIGH).

It belongs to the class-I aminoacyl-tRNA synthetase family. Glutamate--tRNA ligase type 2 subfamily.

The protein localises to the cytoplasm. The catalysed reaction is tRNA(Glu) + L-glutamate + ATP = L-glutamyl-tRNA(Glu) + AMP + diphosphate. Its function is as follows. Catalyzes the attachment of glutamate to tRNA(Glu) in a two-step reaction: glutamate is first activated by ATP to form Glu-AMP and then transferred to the acceptor end of tRNA(Glu). The polypeptide is Glutamate--tRNA ligase (Haloarcula marismortui (strain ATCC 43049 / DSM 3752 / JCM 8966 / VKM B-1809) (Halobacterium marismortui)).